A 220-amino-acid chain; its full sequence is Probable nicotinate-nucleotide adenylyltransferase (220 aa).

This sequence belongs to the NadD family.

It carries out the reaction nicotinate beta-D-ribonucleotide + ATP + H(+) = deamido-NAD(+) + diphosphate. It functions in the pathway cofactor biosynthesis; NAD(+) biosynthesis; deamido-NAD(+) from nicotinate D-ribonucleotide: step 1/1. Functionally, catalyzes the reversible adenylation of nicotinate mononucleotide (NaMN) to nicotinic acid adenine dinucleotide (NaAD). This is Probable nicotinate-nucleotide adenylyltransferase from Serratia proteamaculans (strain 568).